The following is a 365-amino-acid chain: Protein RecA (365 aa).

73 to 80 is an ATP binding site; it reads GPESSGKT.

This sequence belongs to the RecA family.

Its subcellular location is the cytoplasm. Its function is as follows. Can catalyze the hydrolysis of ATP in the presence of single-stranded DNA, the ATP-dependent uptake of single-stranded DNA by duplex DNA, and the ATP-dependent hybridization of homologous single-stranded DNAs. It interacts with LexA causing its activation and leading to its autocatalytic cleavage. This Prochlorococcus marinus (strain MIT 9215) protein is Protein RecA.